The primary structure comprises 244 residues: Proteasome subunit alpha 2 (244 aa).

It belongs to the peptidase T1A family. As to quaternary structure, the 20S proteasome core is composed of 14 alpha and 14 beta subunits that assemble into four stacked heptameric rings, resulting in a barrel-shaped structure. The two inner rings, each composed of seven catalytic beta subunits, are sandwiched by two outer rings, each composed of seven alpha subunits. The catalytic chamber with the active sites is on the inside of the barrel. Has a gated structure, the ends of the cylinder being occluded by the N-termini of the alpha-subunits. Is capped at one or both ends by the proteasome regulatory ATPase, PAN.

The protein resides in the cytoplasm. The formation of the proteasomal ATPase PAN-20S proteasome complex, via the docking of the C-termini of PAN into the intersubunit pockets in the alpha-rings, triggers opening of the gate for substrate entry. Interconversion between the open-gate and close-gate conformations leads to a dynamic regulation of the 20S proteasome proteolysis activity. Its function is as follows. Component of the proteasome core, a large protease complex with broad specificity involved in protein degradation. This is Proteasome subunit alpha 2 from Haloarcula marismortui (strain ATCC 43049 / DSM 3752 / JCM 8966 / VKM B-1809) (Halobacterium marismortui).